The chain runs to 421 residues: Ankyrin repeat domain-containing protein 61 (421 aa).

ANK repeat units follow at residues 27–57 (TLHS…NQPL), 74–103 (QPIF…DPEV), 107–146 (QGFT…NAVL), 166–195 (NKHS…QVNA), 199–228 (SSMT…NVNC), 233–272 (TGNT…QVNA), 276–305 (EGQT…NVNI), and 309–342 (NGES…PLRL).

This Mus musculus (Mouse) protein is Ankyrin repeat domain-containing protein 61 (Ankrd61).